The chain runs to 1057 residues: Carbamoyl phosphate synthase large chain (1057 aa).

The interval 1–401 is carboxyphosphate synthetic domain; the sequence is MPKRNDIKTI…SLLKAIRSLE (401 aa). ATP is bound by residues Arg129, Arg169, Gly175, Gly176, Lys208, Ile210, Glu215, Gly241, Ile242, His243, Gln284, and Glu298. In terms of domain architecture, ATP-grasp 1 spans 133-327; it reads RNLMNELNEP…IAKLAAKIAV (195 aa). Mg(2+) contacts are provided by Gln284, Glu298, and Asn300. Gln284, Glu298, and Asn300 together coordinate Mn(2+). The tract at residues 402–546 is oligomerization domain; it reads YGVHHLGLPN…YGTYETENES (145 aa). Residues 547 to 929 form a carbamoyl phosphate synthetic domain region; sequence IRSDKKKVVV…ALYKGLVASG (383 aa). Residues 671 to 861 enclose the ATP-grasp 2 domain; that stretch reads EALMQRIEIP…MANLAMKAIL (191 aa). ATP contacts are provided by Arg707, Arg746, Leu748, Glu752, Gly777, Val778, His779, Ser780, Gln820, and Glu832. Gln820, Glu832, and Asn834 together coordinate Mg(2+). 3 residues coordinate Mn(2+): Gln820, Glu832, and Asn834. The 128-residue stretch at 930–1057 folds into the MGS-like domain; the sequence is LQVKDHGTVL…ESMTFNMNQM (128 aa). The segment at 930–1057 is allosteric domain; that stretch reads LQVKDHGTVL…ESMTFNMNQM (128 aa).

It belongs to the CarB family. Composed of two chains; the small (or glutamine) chain promotes the hydrolysis of glutamine to ammonia, which is used by the large (or ammonia) chain to synthesize carbamoyl phosphate. Tetramer of heterodimers (alpha,beta)4. Mg(2+) is required as a cofactor. Requires Mn(2+) as cofactor.

It catalyses the reaction hydrogencarbonate + L-glutamine + 2 ATP + H2O = carbamoyl phosphate + L-glutamate + 2 ADP + phosphate + 2 H(+). It carries out the reaction hydrogencarbonate + NH4(+) + 2 ATP = carbamoyl phosphate + 2 ADP + phosphate + 2 H(+). The protein operates within amino-acid biosynthesis; L-arginine biosynthesis; carbamoyl phosphate from bicarbonate: step 1/1. It functions in the pathway pyrimidine metabolism; UMP biosynthesis via de novo pathway; (S)-dihydroorotate from bicarbonate: step 1/3. Functionally, large subunit of the glutamine-dependent carbamoyl phosphate synthetase (CPSase). CPSase catalyzes the formation of carbamoyl phosphate from the ammonia moiety of glutamine, carbonate, and phosphate donated by ATP, constituting the first step of 2 biosynthetic pathways, one leading to arginine and/or urea and the other to pyrimidine nucleotides. The large subunit (synthetase) binds the substrates ammonia (free or transferred from glutamine from the small subunit), hydrogencarbonate and ATP and carries out an ATP-coupled ligase reaction, activating hydrogencarbonate by forming carboxy phosphate which reacts with ammonia to form carbamoyl phosphate. This Macrococcus caseolyticus (strain JCSC5402) (Macrococcoides caseolyticum) protein is Carbamoyl phosphate synthase large chain.